The chain runs to 178 residues: Negative modulator of initiation of replication (178 aa).

Residues 113 to 117 (RTRVY) form an interaction with DNA region.

The protein belongs to the SeqA family. Homodimer. Polymerizes to form helical filaments.

It localises to the cytoplasm. Negative regulator of replication initiation, which contributes to regulation of DNA replication and ensures that replication initiation occurs exactly once per chromosome per cell cycle. Binds to pairs of hemimethylated GATC sequences in the oriC region, thus preventing assembly of replication proteins and re-initiation at newly replicated origins. Repression is relieved when the region becomes fully methylated. In Photobacterium profundum (strain SS9), this protein is Negative modulator of initiation of replication.